A 646-amino-acid polypeptide reads, in one-letter code: Vitamin K-dependent protein S (646 aa).

Positions 1 to 12 (GHASQVLVRKRR) are excised as a propeptide. The region spanning 13 to 58 (ANSMLEETKKGNLERECIEELCNKEEAREVFENDPETDYFYPKYLG) is the Gla domain. 4-carboxyglutamate occurs at positions 18, 19, 26, 28, 31, 32, 37, 38, 41, 44, and 48. Cysteine 29 and cysteine 34 are disulfide-bonded. The tract at residues 59 to 87 (CLGSFRAKLFTATRRSANGYPDLRSCVNA) is thrombin-sensitive. Positions 88 to 126 (IPDQCNPLPCSEEGYLNCKDGQATFTCICKPGWQGEKCE) constitute an EGF-like 1 domain. Intrachain disulfides connect cysteine 92–cysteine 105, cysteine 97–cysteine 114, cysteine 116–cysteine 125, cysteine 132–cysteine 146, cysteine 142–cysteine 155, cysteine 157–cysteine 170, cysteine 176–cysteine 188, cysteine 183–cysteine 197, cysteine 199–cysteine 212, cysteine 218–cysteine 227, cysteine 223–cysteine 236, cysteine 238–cysteine 253, and cysteine 420–cysteine 446. Position 107 is a (3R)-3-hydroxyaspartate (aspartate 107). One can recognise an EGF-like 2; calcium-binding domain in the interval 128-171 (DINECKDPTNINGGCSQICDNTAGSYHCSCKSGFVMLANEKDCK). An EGF-like 3; calcium-binding domain is found at 172 to 213 (DMDECSVKPSVCGTAVCKNTPGDFECECSEGYRYNPTAKSCE). The EGF-like 4; calcium-binding domain maps to 214 to 254 (DIDECSENMCAQLCVNYPGGYSCYCDGKKGFKLAQDKKSCE). Laminin G-like domains are found at residues 270–446 (LLYL…KKHC) and 455–636 (YYPG…AHSC). Asparagine 470 and asparagine 480 each carry an N-linked (GlcNAc...) asparagine glycan. Cysteines 609 and 636 form a disulfide.

As to quaternary structure, interacts with C4b-binding protein, a regulator of the complex system. In rabbit plasma however, protein S appears to be present only in free form. In terms of processing, the iron and 2-oxoglutarate dependent 3-hydroxylation of aspartate and asparagine is (R) stereospecific within EGF domains. In terms of tissue distribution, plasma.

It is found in the secreted. Anticoagulant plasma protein; it is a cofactor to activated protein C in the degradation of coagulation factors Va and VIIIa. It helps to prevent coagulation and stimulating fibrinolysis. The protein is Vitamin K-dependent protein S (PROS1) of Oryctolagus cuniculus (Rabbit).